The primary structure comprises 405 residues: CRS2-associated factor 1, mitochondrial (405 aa).

The N-terminal 20 residues, 1-20, are a transit peptide targeting the mitochondrion; the sequence is MFLIRLSRHNPSSFTLLTRR. The segment at 32 to 75 is disordered; that stretch reads RDLYNFQSPPPLSSSASENPDFNQKNNNKKKPKPQYRPPSSLEG. 2 CRM domains span residues 157–255 and 277–373; these read ASLT…KRPK and DGLS…KEDD. The interval 384–405 is disordered; it reads SIDSDVDLSCSRGAQDSPDETT.

In terms of assembly, part of large ribonucleo-protein complexes that include group IIB introns.

It localises to the mitochondrion. In terms of biological role, may be involved in the splicing of group IIB introns in mitochondria. In Arabidopsis thaliana (Mouse-ear cress), this protein is CRS2-associated factor 1, mitochondrial.